The following is a 344-amino-acid chain: Transmembrane protein 268 (344 aa).

The disordered stretch occupies residues 1–31 (MACEPQMDPGGAAGPLPTSSPGWSPLPGGSP). Residues 14 to 27 (GPLPTSSPGWSPLP) are compositionally biased toward low complexity. 2 helical membrane-spanning segments follow: residues 106-126 (AFAVVFYVVVWANIYSTSQMF) and 133-153 (AGVLLVTLAATSLTLTLVVIF). Residues 244-266 (TANEGPENLLEETPLLPDRPGST) are disordered. Low complexity predominate over residues 247–259 (EGPENLLEETPLL).

As to quaternary structure, interacts with ITGAM; this interaction inhibits ITGAM degradation via the endosome-lysosome pathway. Interacts with ITGB4; this interaction prevents ITGB4 degradation.

Its subcellular location is the cell membrane. Stabilizes cell surface expression of ITGAM and participates in the adhesion and migration of phagocytes during bacterial clearance. In Bos taurus (Bovine), this protein is Transmembrane protein 268 (TMEM268).